The following is a 127-amino-acid chain: Aspartate 1-decarboxylase (127 aa).

Ser-25 (schiff-base intermediate with substrate; via pyruvic acid) is an active-site residue. Ser-25 is modified (pyruvic acid (Ser)). Thr-57 provides a ligand contact to substrate. Tyr-58 functions as the Proton donor in the catalytic mechanism. Residue Gly-73–Ala-75 participates in substrate binding.

Belongs to the PanD family. As to quaternary structure, heterooctamer of four alpha and four beta subunits. It depends on pyruvate as a cofactor. In terms of processing, is synthesized initially as an inactive proenzyme, which is activated by self-cleavage at a specific serine bond to produce a beta-subunit with a hydroxyl group at its C-terminus and an alpha-subunit with a pyruvoyl group at its N-terminus.

The protein resides in the cytoplasm. It carries out the reaction L-aspartate + H(+) = beta-alanine + CO2. It functions in the pathway cofactor biosynthesis; (R)-pantothenate biosynthesis; beta-alanine from L-aspartate: step 1/1. Functionally, catalyzes the pyruvoyl-dependent decarboxylation of aspartate to produce beta-alanine. This chain is Aspartate 1-decarboxylase, found in Bacillus cereus (strain G9842).